A 396-amino-acid polypeptide reads, in one-letter code: Carbamoyl phosphate synthase small chain (396 aa).

Positions 1 to 204 (MTQHDNDPAW…WDKGFGQQDK (204 aa)) are CPSase. Positions 59, 256, and 258 each coordinate L-glutamine. Residues 208-396 (NVVAIDYGIK…AELMRQKKSA (189 aa)) enclose the Glutamine amidotransferase type-1 domain. C285 acts as the Nucleophile in catalysis. L-glutamine contacts are provided by L286, Q289, N327, G329, and F330. Catalysis depends on residues H369 and E371.

The protein belongs to the CarA family. Composed of two chains; the small (or glutamine) chain promotes the hydrolysis of glutamine to ammonia, which is used by the large (or ammonia) chain to synthesize carbamoyl phosphate. Tetramer of heterodimers (alpha,beta)4.

The enzyme catalyses hydrogencarbonate + L-glutamine + 2 ATP + H2O = carbamoyl phosphate + L-glutamate + 2 ADP + phosphate + 2 H(+). It carries out the reaction L-glutamine + H2O = L-glutamate + NH4(+). It participates in amino-acid biosynthesis; L-arginine biosynthesis; carbamoyl phosphate from bicarbonate: step 1/1. Its pathway is pyrimidine metabolism; UMP biosynthesis via de novo pathway; (S)-dihydroorotate from bicarbonate: step 1/3. Small subunit of the glutamine-dependent carbamoyl phosphate synthetase (CPSase). CPSase catalyzes the formation of carbamoyl phosphate from the ammonia moiety of glutamine, carbonate, and phosphate donated by ATP, constituting the first step of 2 biosynthetic pathways, one leading to arginine and/or urea and the other to pyrimidine nucleotides. The small subunit (glutamine amidotransferase) binds and cleaves glutamine to supply the large subunit with the substrate ammonia. This is Carbamoyl phosphate synthase small chain from Bradyrhizobium diazoefficiens (strain JCM 10833 / BCRC 13528 / IAM 13628 / NBRC 14792 / USDA 110).